Consider the following 863-residue polypeptide: MAYPFHDIETKWQQYWEEHQTFRTPDEVPDDQEEFYVLDMFPYPSGSGLHVGHPEGYTATDIVARYKRKQGFNVLHPMGWDAFGLPAEQYALKTNTHPRETTEKNIAQFKRQLKRLGFSYDWQREINTTDPDYYKWTQWIFLQLYEKGLAYQSEEPVWWCEELGTVLANEEVIDGKSERGGYPCERVPMRQWVLKITEYADRLLEGLEDLDWPESTKEMQRNWIGRSEGANVYFDLVGADDALEVYTTRPDTLFGATYMVLAPEHELLDEITTDEHREDVDEYCRQALRKSERKRQQQGDKTGVFTGGYAVNPVNGEEIPIWVADYVLVSYGTGAIMAVPAHDERDHAFANKYDLPIREVVEGGDIDEEAYTGDGPHVHSANEAVSLNGLRNEEAKEAITEWLDEEEKGERTVNYQLQDWLFSRQRYWGEPFPIVFTEDGEDKPVPEEELPVTLPDLDVFEPSGTPEGPLATIEDWRETTDPETGEPAQRETNTMPQWAGSCWYYLRFIDPDNDEQLVDPEKEEYWMPVDLYVGGSEHAVLHLLYARFWHKVLYDAGVVSTKEPFQTLVHQGMILGETEYTAYRDDAGEFVSAEQVDDDADLTPVPVDDGDVKKDGDVFVLADRPAVRVDARSHKMSKSRGNVINPDDVVDEYGADTLRLYEMFMGPLEQDKPWSTDDMEGVHRFLNRIWRLVVDADSGGLAVSDEEPDREQLRTLHRTIKTVTEDIEARDFNTAIAAMMEFVNAANKWDALPRQVATPFVLLLSPFAPHLAEELWARLGHDQSLAYADWPAYDDELIRREVVEMPVQVDGTVRATIEVAADAEEADVLATAKEAENVARHLDDEDLQREIYVPGQIVNFVTG.

A 'HIGH' region motif is present at residues 42 to 53; it reads PYPSGSGLHVGH. The short motif at 635-639 is the 'KMSKS' region element; it reads KMSKS. Lys-638 contributes to the ATP binding site.

The protein belongs to the class-I aminoacyl-tRNA synthetase family.

The protein resides in the cytoplasm. It carries out the reaction tRNA(Leu) + L-leucine + ATP = L-leucyl-tRNA(Leu) + AMP + diphosphate. This chain is Leucine--tRNA ligase, found in Salinibacter ruber (strain DSM 13855 / M31).